Here is a 312-residue protein sequence, read N- to C-terminus: 6-hydroxy-3-succinoylpyridine 3-monooxygenase HspA (312 aa).

Residues 14 to 210 (IYIDGYNFYY…RSANTDLIKF (197 aa)) form the NYN domain.

It catalyses the reaction 4-(6-hydroxypyridin-3-yl)-4-oxobutanoate + 2 NADH + O2 + 2 H(+) = 2,5-dihydroxypyridine + succinate semialdehyde + 2 NAD(+) + H2O. It participates in alkaloid degradation; nicotine degradation. In terms of biological role, involved in the nicotine degradation. Catalyzes the cleavage of 6-hydroxy-3-succinoylpyridine (HSP) by incorporation of oxygen at the 3-position to produce to 2,5-dihydroxypyridine (DHP) and succinic semialdehyde. The polypeptide is 6-hydroxy-3-succinoylpyridine 3-monooxygenase HspA (Pseudomonas putida (strain DSM 28022 / S16)).